Here is a 350-residue protein sequence, read N- to C-terminus: Olfactory receptor 52I2 (350 aa).

At 1 to 55 (MCQQILRDCILLIHHLCINRKKVSLVMLGPAYNHTMETPASFLLVGIPGLQSSHL) the chain is on the extracellular side. Asparagine 33 carries N-linked (GlcNAc...) asparagine glycosylation. A helical membrane pass occupies residues 56 to 76 (WLAISLSAMYIIALLGNTIIV). The Cytoplasmic portion of the chain corresponds to 77 to 84 (TAIWMDST). A helical membrane pass occupies residues 85–105 (RHEPMYCFLCVLAAVDIVMAS). The Extracellular portion of the chain corresponds to 106–129 (SVVPKMVSIFCSGDSSISFSACFT). A disulfide bond links cysteine 127 and cysteine 219. Residues 130-150 (QMFFVHLATAVETGLLLTMAF) form a helical membrane-spanning segment. The Cytoplasmic portion of the chain corresponds to 151-169 (DRYVAICKPLHYKRILTPQ). A helical membrane pass occupies residues 170–190 (VMLGMSMAITIRAIIAITPLS). Residues 191–226 (WMVSHLPFCGSNVVVHSYCEHIALARLACADPVPSS) lie on the Extracellular side of the membrane. The helical transmembrane segment at 227–247 (LYSLIGSSLMVGSDVAFIAAS) threads the bilayer. At 248–267 (YILILKAVFGLSSKTAQLKA) the chain is on the cytoplasmic side. The chain crosses the membrane as a helical span at residues 268-288 (LSTCGSHVGVMALYYLPGMAS). Over 289–304 (IYAAWLGQDVVPLHTQ) the chain is Extracellular. The helical transmembrane segment at 305 to 325 (VLLADLYVIIPATLNPIIYGM) threads the bilayer. The Cytoplasmic portion of the chain corresponds to 326 to 350 (RTKQLRERIWSYLMHVLFDHSNLGS).

The protein belongs to the G-protein coupled receptor 1 family.

The protein resides in the cell membrane. In terms of biological role, odorant receptor. The protein is Olfactory receptor 52I2 (OR52I2) of Homo sapiens (Human).